The sequence spans 466 residues: Argininosuccinate lyase (466 aa).

This sequence belongs to the lyase 1 family. Argininosuccinate lyase subfamily.

The protein localises to the cytoplasm. The catalysed reaction is 2-(N(omega)-L-arginino)succinate = fumarate + L-arginine. Its pathway is amino-acid biosynthesis; L-arginine biosynthesis; L-arginine from L-ornithine and carbamoyl phosphate: step 3/3. The chain is Argininosuccinate lyase from Brucella abortus (strain S19).